The primary structure comprises 528 residues: CTD kinase subunit alpha (528 aa).

Over residues 1-15 the composition is skewed to polar residues; it reads MSYNNGNTYSKSYSR. The segment at 1 to 148 is disordered; the sequence is MSYNNGNTYS…NTSNDIKNGY (148 aa). At Ser-14 the chain carries Phosphoserine; by autocatalysis. Residues 37-44 carry the Nuclear localization signal motif; the sequence is PPKRIRTD. A compositionally biased stretch (polar residues) spans 45–103; it reads SGYQSNMDNISSHRVNSNDQPGHTKSRGNNNLSRYNDTSFQTSSRYQGSRYNNNNTSYE. Over residues 104-118 the composition is skewed to basic and acidic residues; the sequence is NRPKSIKRDETKAEF. The segment covering 134–144 has biased composition (polar residues); it reads YNNSSNTSNDI. The Protein kinase domain occupies 183 to 469; sequence YLRIMQVGEG…ATEALQSDYF (287 aa). ATP-binding positions include 189–197 and Lys-212; that span reads VGEGTYGKV. The active-site Proton acceptor is Asp-306. Thr-338 carries the phosphothreonine modification. Residues 497–528 are disordered; it reads QKRPNILSTNTNNKGNGNSNNNNNNNNDDDDK. Residues 504-522 show a composition bias toward low complexity; that stretch reads STNTNNKGNGNSNNNNNNN.

This sequence belongs to the protein kinase superfamily. CMGC Ser/Thr protein kinase family. CDC2/CDKX subfamily. As to quaternary structure, CTDK-I consists of three subunits, CTK1, CTK2 and CTK3 (also called alpha, beta and gamma). Interacts directly with the CTK2 and CTK3 subunits, this interaction is required for kinase activity. Interacts with RNA polymerase I. Interacts with SNF1, but only at low glucose concentrations. Interacts with translating ribosomes. Post-translationally, phosphorylated on Thr-338 by CAK1. Phosphorylation is essential for the elevated CTD Ser-2 phosphorylation and required to activate transcription of stationary-phase genes during the diauxic shift.

The protein resides in the nucleus. It localises to the nucleolus. Its subcellular location is the cytoplasm. It catalyses the reaction [DNA-directed RNA polymerase] + ATP = phospho-[DNA-directed RNA polymerase] + ADP + H(+). In terms of biological role, catalytic subunit of the CTDK-I complex, which hyperphosphorylates the C-terminal heptapeptide repeat domain (CTD) of the largest RNA polymerase II subunit. CTDK-I phosphorylates 'Ser-5' if the CTD substrate is not phosphorylated at 'Ser-5', but will phosphorylate 'Ser-2' of a CTD substrate if 'Ser-5' is already phosphorylated. CTDK-I is also more reactive toward substrates that are prephosphorylated at 'Ser-2' or 'Ser-5' compared with an unphosphorylated CTD substrate, therefore efficiently creating doubly phosphorylated CTD repeats. Involved in RNA polymerase II transcriptional elongation, and through PTI1, pre-mRNA 3'-end processing. Participates in both positive and negative regulation of CTD phosphorylation. Required for DNA damage induced transcription, including the expression of the RNR genes, and reprogramming of gene expression upon amino acid starvation. Required for SET2 mediated H3K36 methylation. Also regulates H3K4 methylation. Controls the maintenance of suppressive chromatin in the coding regions of genes by both promoting H3K36 methylation, which leads to histone deacetylation, and catalyzing phosphorylation of the CTD required to localize H3K4 chromatin modification specifically to the 5' ends of genes, thereby creating a boundary for H3K4 methylation that prevents a mark associated with transcriptional initiation from spreading into the bodies of genes. Involved in RNA polymerase I transcription. Involved in telomere maintenance. Acts together with SNF1 to induce GSY2 transcription in response to glucose limitation. Involved in the adaptation to alternative carbon sources, including galactose, glycerol and ethanol, but not raffinose. Required for the integrity of the rDNA locus. Functions in translation elongation by enhancing decoding fidelity. Needed for translational accuracy by phosphorylating RPS2. This Saccharomyces cerevisiae (strain ATCC 204508 / S288c) (Baker's yeast) protein is CTD kinase subunit alpha (CTK1).